The sequence spans 181 residues: Acireductone dioxygenase (181 aa).

Fe(2+) is bound by residues His98, His100, Glu104, and His142. Residues His98, His100, Glu104, and His142 each contribute to the Ni(2+) site.

This sequence belongs to the acireductone dioxygenase (ARD) family. Monomer. Requires Fe(2+) as cofactor. It depends on Ni(2+) as a cofactor.

The catalysed reaction is 1,2-dihydroxy-5-(methylsulfanyl)pent-1-en-3-one + O2 = 3-(methylsulfanyl)propanoate + CO + formate + 2 H(+). The enzyme catalyses 1,2-dihydroxy-5-(methylsulfanyl)pent-1-en-3-one + O2 = 4-methylsulfanyl-2-oxobutanoate + formate + 2 H(+). The protein operates within amino-acid biosynthesis; L-methionine biosynthesis via salvage pathway; L-methionine from S-methyl-5-thio-alpha-D-ribose 1-phosphate: step 5/6. In terms of biological role, catalyzes 2 different reactions between oxygen and the acireductone 1,2-dihydroxy-3-keto-5-methylthiopentene (DHK-MTPene) depending upon the metal bound in the active site. Fe-containing acireductone dioxygenase (Fe-ARD) produces formate and 2-keto-4-methylthiobutyrate (KMTB), the alpha-ketoacid precursor of methionine in the methionine recycle pathway. Ni-containing acireductone dioxygenase (Ni-ARD) produces methylthiopropionate, carbon monoxide and formate, and does not lie on the methionine recycle pathway. The sequence is that of Acireductone dioxygenase from Synechococcus sp. (strain ATCC 27144 / PCC 6301 / SAUG 1402/1) (Anacystis nidulans).